A 338-amino-acid chain; its full sequence is Phenylalanine--tRNA ligase alpha subunit (338 aa).

A Mg(2+)-binding site is contributed by glutamate 259.

This sequence belongs to the class-II aminoacyl-tRNA synthetase family. Phe-tRNA synthetase alpha subunit type 1 subfamily. In terms of assembly, tetramer of two alpha and two beta subunits. Mg(2+) serves as cofactor.

Its subcellular location is the cytoplasm. It carries out the reaction tRNA(Phe) + L-phenylalanine + ATP = L-phenylalanyl-tRNA(Phe) + AMP + diphosphate + H(+). The polypeptide is Phenylalanine--tRNA ligase alpha subunit (Herminiimonas arsenicoxydans).